We begin with the raw amino-acid sequence, 597 residues long: Elongation factor 4 (597 aa).

A tr-type G domain is found at 2-184 (KNIRNFSIIA…EIVHKIPAPE (183 aa)). Residues 14 to 19 (DHGKST) and 131 to 134 (NKID) contribute to the GTP site.

The protein belongs to the TRAFAC class translation factor GTPase superfamily. Classic translation factor GTPase family. LepA subfamily.

The protein resides in the cell inner membrane. It catalyses the reaction GTP + H2O = GDP + phosphate + H(+). Functionally, required for accurate and efficient protein synthesis under certain stress conditions. May act as a fidelity factor of the translation reaction, by catalyzing a one-codon backward translocation of tRNAs on improperly translocated ribosomes. Back-translocation proceeds from a post-translocation (POST) complex to a pre-translocation (PRE) complex, thus giving elongation factor G a second chance to translocate the tRNAs correctly. Binds to ribosomes in a GTP-dependent manner. The protein is Elongation factor 4 of Actinobacillus succinogenes (strain ATCC 55618 / DSM 22257 / CCUG 43843 / 130Z).